We begin with the raw amino-acid sequence, 236 residues long: MTGDAGALVLFSGGQDSATCLAWALDRFETVETVGFDYGQRHRVELECRDDFRARIVELNPAWAARLGPDHKLDLSVLGQVSETALTRDAEIALRADGLPNTFVPGRNLLFFTLAAALASRRELRHLVGGMCETDYSGYPDCRDDTLKSLQVTLNLGIGSRSVVHTPLMWLDKAQTWGLAKILGGEKLVDLIRTGTHTCYRGDHDRLQDWGYGCGTCPACELRMKGWQEHRSSLDE.

11–21 (FSGGQDSATCL) lines the ATP pocket. Residues cysteine 199, cysteine 214, cysteine 217, and cysteine 220 each contribute to the Zn(2+) site.

This sequence belongs to the QueC family. Zn(2+) is required as a cofactor.

The catalysed reaction is 7-carboxy-7-deazaguanine + NH4(+) + ATP = 7-cyano-7-deazaguanine + ADP + phosphate + H2O + H(+). Its pathway is purine metabolism; 7-cyano-7-deazaguanine biosynthesis. Functionally, catalyzes the ATP-dependent conversion of 7-carboxy-7-deazaguanine (CDG) to 7-cyano-7-deazaguanine (preQ(0)). This is 7-cyano-7-deazaguanine synthase 2 from Sphingopyxis alaskensis (strain DSM 13593 / LMG 18877 / RB2256) (Sphingomonas alaskensis).